A 513-amino-acid polypeptide reads, in one-letter code: Gluconokinase (513 aa).

ATP contacts are provided by residues Lys16, Thr261, Gly300, and 412-416 (GFARS).

The protein belongs to the FGGY kinase family.

The catalysed reaction is D-gluconate + ATP = 6-phospho-D-gluconate + ADP + H(+). The protein operates within carbohydrate acid metabolism; D-gluconate degradation. Its activity is regulated as follows. Catabolite repression by gluconate. The chain is Gluconokinase (gntK) from Bacillus subtilis (strain 168).